Consider the following 244-residue polypeptide: 7-cyano-7-deazaguanine synthase (244 aa).

An ATP-binding site is contributed by 14-24; it reads FSGGQDSATCL. Residues C202, C217, C220, and C223 each contribute to the Zn(2+) site.

It belongs to the QueC family. The cofactor is Zn(2+).

It catalyses the reaction 7-carboxy-7-deazaguanine + NH4(+) + ATP = 7-cyano-7-deazaguanine + ADP + phosphate + H2O + H(+). It participates in purine metabolism; 7-cyano-7-deazaguanine biosynthesis. In terms of biological role, catalyzes the ATP-dependent conversion of 7-carboxy-7-deazaguanine (CDG) to 7-cyano-7-deazaguanine (preQ(0)). The protein is 7-cyano-7-deazaguanine synthase of Paraburkholderia phytofirmans (strain DSM 17436 / LMG 22146 / PsJN) (Burkholderia phytofirmans).